The following is a 196-amino-acid chain: dTTP/UTP pyrophosphatase (196 aa).

The Proton acceptor role is filled by Asp77.

It belongs to the Maf family. YhdE subfamily. It depends on a divalent metal cation as a cofactor.

Its subcellular location is the cytoplasm. The enzyme catalyses dTTP + H2O = dTMP + diphosphate + H(+). It carries out the reaction UTP + H2O = UMP + diphosphate + H(+). Nucleoside triphosphate pyrophosphatase that hydrolyzes dTTP and UTP. May have a dual role in cell division arrest and in preventing the incorporation of modified nucleotides into cellular nucleic acids. The polypeptide is dTTP/UTP pyrophosphatase (Christiangramia forsetii (strain DSM 17595 / CGMCC 1.15422 / KT0803) (Gramella forsetii)).